The chain runs to 174 residues: MTENALPLLSAIEWLPEPSPLLTASLLDWLLEADSMTRRFEAHCQKVTVNLLREAFISPEEIAAEAALLPPEKQYWLREIELCADGIPWLVARTLVPESTLVGPEQKLRQLGSVPLGRYLFASSSLTRDFIDVGQSAGLWARRSRLRLAGKPLLLTELFLPASPLYGSLAKENT.

4 residues coordinate substrate: Met36, Arg78, Leu116, and Glu157.

This sequence belongs to the UbiC family. As to quaternary structure, monomer.

Its subcellular location is the cytoplasm. The catalysed reaction is chorismate = 4-hydroxybenzoate + pyruvate. Its pathway is cofactor biosynthesis; ubiquinone biosynthesis. Functionally, removes the pyruvyl group from chorismate, with concomitant aromatization of the ring, to provide 4-hydroxybenzoate (4HB) for the ubiquinone pathway. The protein is Chorismate pyruvate-lyase of Erwinia tasmaniensis (strain DSM 17950 / CFBP 7177 / CIP 109463 / NCPPB 4357 / Et1/99).